The chain runs to 266 residues: Energy-coupling factor transporter transmembrane protein EcfT 1 (266 aa).

The next 5 helical transmembrane spans lie at Ile-33–Leu-53, Leu-73–Ile-93, Leu-107–Ile-127, Val-152–Met-172, and His-243–Leu-263.

It belongs to the energy-coupling factor EcfT family. In terms of assembly, forms a stable energy-coupling factor (ECF) transporter complex composed of 2 membrane-embedded substrate-binding proteins (S component), 2 ATP-binding proteins (A component) and 2 transmembrane proteins (T component). May be able to interact with more than 1 S component at a time.

It is found in the cell membrane. Its function is as follows. Transmembrane (T) component of an energy-coupling factor (ECF) ABC-transporter complex. Unlike classic ABC transporters this ECF transporter provides the energy necessary to transport a number of different substrates. This Listeria monocytogenes serotype 1/2a (strain 08-5578) protein is Energy-coupling factor transporter transmembrane protein EcfT 1.